We begin with the raw amino-acid sequence, 384 residues long: PqqA peptide cyclase (384 aa).

Residues 14 to 230 form the Radical SAM core domain; it reads IPAPVGLLAE…EAARERLKGQ (217 aa). The [4Fe-4S] cluster site is built by Cys-28, Cys-32, and Cys-35.

This sequence belongs to the radical SAM superfamily. PqqE family. Interacts with PqqD. The interaction is necessary for activity of PqqE. [4Fe-4S] cluster serves as cofactor.

It carries out the reaction [PQQ precursor protein] + S-adenosyl-L-methionine = E-Y cross-linked-[PQQ precursor protein] + 5'-deoxyadenosine + L-methionine + H(+). It participates in cofactor biosynthesis; pyrroloquinoline quinone biosynthesis. Catalyzes the cross-linking of a glutamate residue and a tyrosine residue in the PqqA protein as part of the biosynthesis of pyrroloquinoline quinone (PQQ). This chain is PqqA peptide cyclase, found in Methylorubrum extorquens (strain CM4 / NCIMB 13688) (Methylobacterium extorquens).